An 88-amino-acid chain; its full sequence is MGSLSPWHWAILAVVVIVLFGAKKLPDAARSLGKSMRIFKSEMREMQSETKAEPSAIETNTANPTPVQSQRIDPAAATGQDQTEARPA.

Residues 1–21 (MGSLSPWHWAILAVVVIVLFG) traverse the membrane as a helical segment. Residues 43–52 (MREMQSETKA) are compositionally biased toward basic and acidic residues. The tract at residues 43 to 88 (MREMQSETKAEPSAIETNTANPTPVQSQRIDPAAATGQDQTEARPA) is disordered. Positions 57–71 (IETNTANPTPVQSQR) are enriched in polar residues.

The protein belongs to the TatA/E family. The Tat system comprises two distinct complexes: a TatABC complex, containing multiple copies of TatA, TatB and TatC subunits, and a separate TatA complex, containing only TatA subunits. Substrates initially bind to the TatABC complex, which probably triggers association of the separate TatA complex to form the active translocon.

The protein localises to the cell membrane. Its function is as follows. Part of the twin-arginine translocation (Tat) system that transports large folded proteins containing a characteristic twin-arginine motif in their signal peptide across membranes. TatA could form the protein-conducting channel of the Tat system. This Mycobacterium marinum (strain ATCC BAA-535 / M) protein is Sec-independent protein translocase protein TatA.